Reading from the N-terminus, the 176-residue chain is Adenine phosphoribosyltransferase (176 aa).

This sequence belongs to the purine/pyrimidine phosphoribosyltransferase family. As to quaternary structure, homodimer.

Its subcellular location is the cytoplasm. The catalysed reaction is AMP + diphosphate = 5-phospho-alpha-D-ribose 1-diphosphate + adenine. It participates in purine metabolism; AMP biosynthesis via salvage pathway; AMP from adenine: step 1/1. Functionally, catalyzes a salvage reaction resulting in the formation of AMP, that is energically less costly than de novo synthesis. The polypeptide is Adenine phosphoribosyltransferase (Borreliella burgdorferi (strain ATCC 35210 / DSM 4680 / CIP 102532 / B31) (Borrelia burgdorferi)).